We begin with the raw amino-acid sequence, 375 residues long: 23S rRNA (uracil(747)-C(5))-methyltransferase RlmC (375 aa).

[4Fe-4S] cluster-binding residues include C3, C11, C14, and C87. 4 residues coordinate S-adenosyl-L-methionine: Q212, F241, E262, and N307. Residue C334 is the Nucleophile of the active site.

This sequence belongs to the class I-like SAM-binding methyltransferase superfamily. RNA M5U methyltransferase family. RlmC subfamily.

It carries out the reaction uridine(747) in 23S rRNA + S-adenosyl-L-methionine = 5-methyluridine(747) in 23S rRNA + S-adenosyl-L-homocysteine + H(+). Functionally, catalyzes the formation of 5-methyl-uridine at position 747 (m5U747) in 23S rRNA. The polypeptide is 23S rRNA (uracil(747)-C(5))-methyltransferase RlmC (Vibrio cholerae serotype O1 (strain ATCC 39541 / Classical Ogawa 395 / O395)).